The chain runs to 815 residues: Kinesin heavy chain (815 aa).

The Kinesin motor domain occupies 11–329 (GVQVFCRIRP…LLFGARAKTI (319 aa)). 88-95 (GQTSSGKT) contacts ATP. Coiled coils occupy residues 335-374 (INEE…RWRA), 422-554 (PITD…LDEC), and 695-785 (PAQK…RMNA). The disordered stretch occupies residues 788-815 (IVKPIRPGQVYTSPSAGMSQGAPNGSNA). A compositionally biased stretch (polar residues) spans 797–815 (VYTSPSAGMSQGAPNGSNA).

The protein belongs to the TRAFAC class myosin-kinesin ATPase superfamily. Kinesin family. Kinesin subfamily. As to quaternary structure, oligomer composed of two heavy chains and two light chains.

The protein resides in the cytoplasm. It localises to the cytoskeleton. Its function is as follows. Microtubule-dependent motor protein required for organelle transport. Plays a role in endosome transport. Required for the transport of mitochondria along the axon of motor neurons. Involved in the nuclear migration of hyp7 hypodermal precursor cells. Required for the formation of dendritic branches of PVD sensory neurons. In non-ciliated neurons such as the PVD and PHC neurons, required for the organization of minus-end out microtubules in dendrites. Also required for the minus-end out orientation of microtubules in dendrites of AQR gas-sensing neurons. Involved in the localization of unc-33 to neurites. Positively regulates cilium position and dendrite morphogenesis in the postembryonic AQR and PQR gas-sensing neurons. Plays a more prominent role in regulating dendrite morphogenesis in AQR than in PQR neurons. Plays a role in regulating the localization of grdn-1 to the distal dendrites of AQR sensory neurons. The protein is Kinesin heavy chain of Caenorhabditis elegans.